The following is a 335-amino-acid chain: Cut9-interacting protein scn1 (335 aa).

Belongs to the metallo-dependent hydrolases superfamily.

In terms of biological role, interacts with cut9. The sequence is that of Cut9-interacting protein scn1 (scn1) from Schizosaccharomyces pombe (strain 972 / ATCC 24843) (Fission yeast).